We begin with the raw amino-acid sequence, 253 residues long: FGFR1 oncogene partner 2 homolog (253 aa).

Residues 5 to 104 adopt a coiled-coil conformation; the sequence is IEKALADAKA…SALELIMSKY (100 aa). Position 140 is a phosphoserine (Ser140). Positions 160–223 form a coiled coil; it reads LERRHLEANQ…LREILQITRE (64 aa). The tract at residues 231-253 is disordered; it reads DDASESTSLSALVTNSDLSLRKS. The segment covering 235–253 has biased composition (polar residues); it reads ESTSLSALVTNSDLSLRKS.

This sequence belongs to the SIKE family.

It is found in the cytoplasm. Its function is as follows. May be involved in wound healing pathway. This chain is FGFR1 oncogene partner 2 homolog (Fgfr1op2), found in Mus musculus (Mouse).